The sequence spans 138 residues: MAPK kinase substrate protein At1g80180 (138 aa).

Residues 52 to 138 (TSEVQDQTTK…RKRPAKRRSR (87 aa)) are disordered. Over residues 69 to 81 (KPIRTDGGMERSR) the composition is skewed to basic and acidic residues. Ser98 is modified (phosphoserine). Ser105 bears the Phosphoserine; by MAPK6 mark. Over residues 121-138 (QPGKKVNQRKRPAKRRSR) the composition is skewed to basic residues.

In terms of tissue distribution, expressed in developing cotyledons, mature cotyledons, cotyledon epidermis and stomata.

Its function is as follows. May play a role in the regulation of stomata patterning. This Arabidopsis thaliana (Mouse-ear cress) protein is MAPK kinase substrate protein At1g80180.